The chain runs to 601 residues: Membrane protein insertase YidC (601 aa).

A helical transmembrane segment spans residues 10 to 30; it reads ISISLVILVLFQVIASYVLPP. The interval 34–63 is disordered; sequence APPHPATQTAQTQPVSGQPAPGVPAPSAVP. Positions 39–53 are enriched in low complexity; that stretch reads ATQTAQTQPVSGQPA. Residues 54–63 are compositionally biased toward pro residues; it reads PGVPAPSAVP. A run of 4 helical transmembrane segments spans residues 382 to 404, 455 to 475, 510 to 530, and 549 to 569; these read FGNM…FPLV, LPML…FISI, ALSP…TMWG, and FMPV…VLYY.

Belongs to the OXA1/ALB3/YidC family. Type 1 subfamily. As to quaternary structure, interacts with the Sec translocase complex via SecD. Specifically interacts with transmembrane segments of nascent integral membrane proteins during membrane integration.

It localises to the cell inner membrane. In terms of biological role, required for the insertion and/or proper folding and/or complex formation of integral membrane proteins into the membrane. Involved in integration of membrane proteins that insert both dependently and independently of the Sec translocase complex, as well as at least some lipoproteins. Aids folding of multispanning membrane proteins. This is Membrane protein insertase YidC from Acidiphilium cryptum (strain JF-5).